The sequence spans 514 residues: ATP synthase subunit alpha (514 aa).

An ATP-binding site is contributed by G170–T177.

Belongs to the ATPase alpha/beta chains family. F-type ATPases have 2 components, CF(1) - the catalytic core - and CF(0) - the membrane proton channel. CF(1) has five subunits: alpha(3), beta(3), gamma(1), delta(1), epsilon(1). CF(0) has three main subunits: a(1), b(2) and c(9-12). The alpha and beta chains form an alternating ring which encloses part of the gamma chain. CF(1) is attached to CF(0) by a central stalk formed by the gamma and epsilon chains, while a peripheral stalk is formed by the delta and b chains.

The protein localises to the cell inner membrane. It catalyses the reaction ATP + H2O + 4 H(+)(in) = ADP + phosphate + 5 H(+)(out). Produces ATP from ADP in the presence of a proton gradient across the membrane. The alpha chain is a regulatory subunit. In Stutzerimonas stutzeri (strain A1501) (Pseudomonas stutzeri), this protein is ATP synthase subunit alpha.